Reading from the N-terminus, the 401-residue chain is Transcription factor atf-2 (401 aa).

Positions 19 to 38 (SASAEFSSSSSDSSNFSEGS) are enriched in low complexity. Residues 19 to 78 (SASAEFSSSSSDSSNFSEGSPPESRRNSVNESVIKDEHYWERRRRNNDASRRSREKRRQN) form a disordered region. Residues 41 to 78 (ESRRNSVNESVIKDEHYWERRRRNNDASRRSREKRRQN) are compositionally biased toward basic and acidic residues. The region spanning 54 to 100 (DEHYWERRRRNNDASRRSREKRRQNDLAMEEKIMLLSAENERLKSQL) is the bZIP 1 domain. The tract at residues 60–85 (RRRRNNDASRRSREKRRQNDLAMEEK) is basic motif 1. The leucine-zipper 1 stretch occupies residues 89-96 (LSAENERL). The span at 181–211 (SASSLFSSSSSSAFHPFRPSESAQQSFPSSS) shows a compositional bias: low complexity. 2 disordered regions span residues 181–256 (SASS…PQPV) and 273–345 (QRRP…AAKR). Composition is skewed to polar residues over residues 222–256 (DSST…PQPV) and 273–283 (QRRPSPTVPQS). A compositionally biased stretch (low complexity) spans 305–317 (ESVSSSASFSPSH). The bZIP 2 domain occupies 329 to 392 (SPQYVDRRRR…AHFKSVLAQR (64 aa)). A basic motif 2 region spans residues 335-360 (RRRRNNEAAKRCRANRRAVFEYRSRR). The stretch at 361 to 388 (VQLLEGENEDLRTQIETLKAEIAHFKSV) forms a coiled coil. A leucine-zipper 2 region spans residues 364-378 (LEGENEDLRTQIETL).

The protein belongs to the bZIP family. As to quaternary structure, interacts with cell death specification protein ces-2. Post-translationally, phosphorylated by mitogen-activated protein kinases pmk-2 and pmk-3. May be responsive to osmotic stress.

The protein resides in the nucleus. Its function is as follows. Acts as a transcription factor that recognizes and binds to the sequence 5'-[GA]TTA[CT]GTAA[CT]-3', a sequence present in many promoters. Involved in the development of the excretory duct cell, by positively modulating embryonic transcription of putative transcription factor lin-48, acting in concert with cell death specification protein ces-2. Negatively modulates expression of key autophagy-related genes, bec-1/ATG6 and lgg-1/ATG8, and may link together autophagy and apoptosis during development. Positively modulates expression of neuropeptide pigment dispersing factor homologs pdf-1 and pdf-2. This is Transcription factor atf-2 from Caenorhabditis elegans.